The sequence spans 631 residues: Probable potassium transport system protein Kup (631 aa).

12 consecutive transmembrane segments (helical) span residues 17–37 (IGLL…SPLY), 56–76 (ILGV…FKYM), 109–129 (MMMV…SMIT), 147–167 (GLDH…FLIQ), 174–194 (IGVL…ALGV), 215–235 (FFII…LALT), 256–276 (WFIL…ALVL), 288–308 (LLAP…ATII), 346–366 (IYIG…VIGF), 378–398 (VAVT…MLML), 403–423 (PLLA…FFAA), and 428–448 (IFQG…LMTT).

This sequence belongs to the HAK/KUP transporter (TC 2.A.72) family.

Its subcellular location is the cell inner membrane. The enzyme catalyses K(+)(in) + H(+)(in) = K(+)(out) + H(+)(out). Functionally, transport of potassium into the cell. Likely operates as a K(+):H(+) symporter. The sequence is that of Probable potassium transport system protein Kup from Pseudomonas savastanoi pv. phaseolicola (strain 1448A / Race 6) (Pseudomonas syringae pv. phaseolicola (strain 1448A / Race 6)).